The chain runs to 509 residues: Maturase K (509 aa).

It belongs to the intron maturase 2 family. MatK subfamily.

It localises to the plastid. The protein localises to the chloroplast. Its function is as follows. Usually encoded in the trnK tRNA gene intron. Probably assists in splicing its own and other chloroplast group II introns. The protein is Maturase K of Clematis ligusticifolia (Western white clematis).